A 539-amino-acid polypeptide reads, in one-letter code: Eukaryotic translation initiation factor 3 subunit L (539 aa).

Residues 306 to 514 form the PCI domain; sequence TFSDILLYIQ…IHIADTKVSH (209 aa).

Belongs to the eIF-3 subunit L family. In terms of assembly, component of the eukaryotic translation initiation factor 3 (eIF-3) complex. The eIF-3 complex interacts with pix.

It localises to the cytoplasm. Functionally, component of the eukaryotic translation initiation factor 3 (eIF-3) complex, which is involved in protein synthesis of a specialized repertoire of mRNAs and, together with other initiation factors, stimulates binding of mRNA and methionyl-tRNAi to the 40S ribosome. The eIF-3 complex specifically targets and initiates translation of a subset of mRNAs involved in cell proliferation. In Drosophila melanogaster (Fruit fly), this protein is Eukaryotic translation initiation factor 3 subunit L.